Here is a 143-residue protein sequence, read N- to C-terminus: Nucleoside diphosphate kinase (143 aa).

ATP is bound by residues Lys11, Phe59, Arg87, Thr93, Arg104, and Asn114. His117 serves as the catalytic Pros-phosphohistidine intermediate.

It belongs to the NDK family. Homotetramer. It depends on Mg(2+) as a cofactor.

The protein resides in the cytoplasm. It catalyses the reaction a 2'-deoxyribonucleoside 5'-diphosphate + ATP = a 2'-deoxyribonucleoside 5'-triphosphate + ADP. The enzyme catalyses a ribonucleoside 5'-diphosphate + ATP = a ribonucleoside 5'-triphosphate + ADP. Functionally, major role in the synthesis of nucleoside triphosphates other than ATP. The ATP gamma phosphate is transferred to the NDP beta phosphate via a ping-pong mechanism, using a phosphorylated active-site intermediate. This is Nucleoside diphosphate kinase from Tolumonas auensis (strain DSM 9187 / NBRC 110442 / TA 4).